The primary structure comprises 496 residues: Ganglioside-induced differentiation-associated protein 2 (496 aa).

The segment at 25 to 48 is disordered; the sequence is EEGEDVPDGGRKDVPDGGSHSPFP. Positions 44 to 224 constitute a Macro domain; the sequence is HSPFPYRKDI…TYRRLLPLYF (181 aa). One can recognise a CRAL-TRIO domain in the interval 329 to 483; it reads DLSDIAALKA…FVLDYDAREN (155 aa).

This sequence belongs to the GDAP2 family.

The sequence is that of Ganglioside-induced differentiation-associated protein 2 from Xenopus laevis (African clawed frog).